We begin with the raw amino-acid sequence, 91 residues long: Small ribosomal subunit protein bS20 (91 aa).

The segment at 1-23 is disordered; sequence MANTPSAKKRAKQAEKRRSHNAS. Residues 7 to 20 show a composition bias toward basic residues; sequence AKKRAKQAEKRRSH.

The protein belongs to the bacterial ribosomal protein bS20 family.

Binds directly to 16S ribosomal RNA. This Pseudomonas paraeruginosa (strain DSM 24068 / PA7) (Pseudomonas aeruginosa (strain PA7)) protein is Small ribosomal subunit protein bS20.